The primary structure comprises 188 residues: Der GTPase-activating protein YihI (188 aa).

Disordered stretches follow at residues 1-80 (MKQP…VPVP) and 162-188 (DEDD…KDTF). Over residues 27-37 (TRDELDAEARD) the composition is skewed to basic and acidic residues. Positions 47–57 (NRSGARTNVEG) are enriched in polar residues.

Belongs to the YihI family. As to quaternary structure, interacts with Der.

Its function is as follows. A GTPase-activating protein (GAP) that modifies Der/EngA GTPase function. May play a role in ribosome biogenesis. In Yersinia pseudotuberculosis serotype O:1b (strain IP 31758), this protein is Der GTPase-activating protein YihI.